The following is a 2360-amino-acid chain: MAQKPQQFDVLGDTGARVDRPRDSLALIFKRALELGLDDVSQDGGVRFTVGTMCSGTDAPILALRELQDAALAMGYNHLFDFDHQFSVEIEAYKQAFIERNSKPSGEIYRDVIQVSDPSRKDAITAHGSLAPIPAAPDLLVAGSSCVDFSKLNNKRDILAKHSVLSRLYEEAKNTKNGLDFGTVTPQSQSHDVRMALQDVRDSFHTEGESVKTFGSILQFIYDQRPKLIILENVSHAPWRAFTHFWLPLVGYVALSMKVDSKNFLVPQTRTRGYLVAVDQWHYGTELSTRMARLWSSMMESSNWFPNQYPEVHKFLLSSMDQRILEARAIEERKIAENMTRDVEARMCAYDHAKVRRQQGLGPDRPFTQRDGRGNLLPRDTSWQAYIRGTSSRVQDLLDITWLSERKKGGRDLNYKAKYLDLGEGVERLKTQIGIVGCVLPDGDLFATDQGRPILGVEALSLQGLPIDRIRTSVETQADLHDMAGNAMTTTVVGAATLCILIAERQVTRSSGFHDGLPLLDNGASTRTQHLKHLFAIRQSDRNGAADGAFALLQHCPSYSTAQKDQAAVAHLIMIHQKGRRYCPCAGYRKHNPATGLMICTLCNQVRCVTCAGNPAHAFETLLTGPLWSWDETIHALRGILPNRFALTGGHGIPQDDKDVKSLCSSLYTTEKENGNITTRLRELRKCLGAVYYLDHFDNSQVIVATYVSTCGRIELSIGLDQVVWYLYLPEPLEPGSFNQQPAPPIARAILDKSADNVFPSCLSWEIFFLQPVPVVLSLEPQSDSTFRCFVTEFNGQPIKSYPIIPMAATELMVGVEGVYEFSQTCGTPFDLLYSRRTAGSEPSSAPCYLFLDTKHTTEPEEDSWVMSQSVSKLEPGTHREVLCKFSSSWKEQEQKLRQHGTPQTVQCEIPGLWRSVHQTNGALMNISMSDVHLAPDRMTAETSEDLHVIIPGALNFPDVAQAPIPVLQLRIDIPDLPFPVHLLPQLWKTDGEIFKECAKETDSGEKWMRVSDHHHKDALSLISFALGALKANHLPREFTVGILERAGAVCQSLDADFPNPKVHLLWEGFKVKKLFDDSEAAQQLAESYSKRPLPLELDVQIVRADQPRHTGDLYSGRAGGNIAQEPELIIRILFNPTALAHRAWLHIPRDGLIRGIRRDVMQDGHIGFAVDVEFVDPSLKMIEPFEACLSQDVISSATYASAIQLPSFDSCGVQLRPDQIQSVQWMIEKESSNSCFVEREVEEFLVPSSSIRLRSHAEVVNRARGGVLAHDVGFGKTIATLALIDHQRNQSNERSVTERYAWTQERHCHLKATLIVCPPQIVDQWRDEIERFLGSENWNVVVINAKTPFHRGILEMADIVILSTAFIHSTAFVQALTRVAGAANFHDASSASSREFNIWYREAVTDLEDSCQCYADNNRNNGALAKHISLRTQERKASFEKARAACIVESRRKDQKSKATARTQRAKKKSKKPRRTAAAAAESDHSAESDSDSAMDDRKRKVATSHVVSDFKDATVLQMYSFDRVVLDEFSYENKSTAAFVANCVASSKWILSGTPPMADLSQVCAIADLVNMHVARPEASVPRSFPSITRGPRLDKTTRGEAMRQYADPKSAQFALERHEQARTFLEHKMTRRETDISHIGVTEQVVVCRLDPVSSVVYAQLQQVLYDARWDIEEVPGDMRAIIDWLLQQTGNNKASKARENLRMSWHNTIQSLLVQSSTNLSAYGENMKKLGMDVRAGAVSGITVLTSMRTIYQRLQARSKAMIKSQFDMLMYVVDQVQMSGLLTMTNAKGRDKTKQDKAMYYQDHLDDFIQRFTAARPWSFGDAEIRDDFWKGGNGVYGAIDWWKLTEEDVEAMDEDELKHVETKLVCFKASYNPESQMEATGQQLEESVCDLLNANVLDQYHEAEPEKVAANIGLASATLLDVYWKDTAKSKDFEFGNKFRPYRPKLNEEETDRGTSHDQATNRMAMALQSVQAGIEEYIRQARRLRVLGIVQDLFAFAQALEAGHQPNAPTCSVCGSQDNTEMKDLSLFITCGHLLCSGCVAAHEHQHGQAESTTGEVLCPVDSCSAMARSALVPCTQLISATAASTLDFEGKSAKVMKILDVIRTDVKDDEKVLLFVSNKKLKAQLSDALEEDDNVDVYMTTGTHHDTDAIRSFKEPNEDGRKKVLVQSLMSEESAGTNLTEANHVMFAAPLHTDRRNHYMYMRQARGRAIRFGQTRPVRVYHFVTAHTMEVDVLEHRLGHKLLIPEGGDRMPLDDLDYKLYALDTRAASRGPPSATKEASAAPTISSTLRRIRPYIDEVETRKLLDSQEYDEWQDRLDVSPSAATKQTPWFRSQVVEQSADEVYDDDVEVGN.

The SAM-dependent MTase C5-type domain maps to 48 to 507 (FTVGTMCSGT…LCILIAERQV (460 aa)). Cysteine 146 is a catalytic residue. The Helicase ATP-binding domain occupies 1258–1575 (AEVVNRARGG…CAIADLVNMH (318 aa)). 1271-1278 (HDVGFGKT) lines the ATP pocket. The disordered stretch occupies residues 1451 to 1498 (SRRKDQKSKATARTQRAKKKSKKPRRTAAAAAESDHSAESDSDSAMDD). The segment covering 1465–1476 (QRAKKKSKKPRR) has biased composition (basic residues). The segment at 2018–2070 (CSVCGSQDNTEMKDLSLFITCGHLLCSGCVAAHEHQHGQAESTTGEVLCPVDS) adopts an RING-type; degenerate zinc-finger fold. The 166-residue stretch at 2102–2267 (KVMKILDVIR…RMPLDDLDYK (166 aa)) folds into the Helicase C-terminal domain.

This sequence in the N-terminal section; belongs to the class I-like SAM-binding methyltransferase superfamily. C5-methyltransferase family. It in the C-terminal section; belongs to the SNF2/RAD54 helicase family.

It localises to the nucleus. It is found in the chromosome. It carries out the reaction a 2'-deoxycytidine in DNA + S-adenosyl-L-methionine + ATP + H2O = a 5-methyl-2'-deoxycytidine in DNA + S-adenosyl-L-homocysteine + ADP + phosphate + 2 H(+). Its function is as follows. May play a role in cytosine methylation at palindromic 5'-CG-3' and 5'-C[ACT]G-3' sites in DNA. This Verticillium dahliae (strain VdLs.17 / ATCC MYA-4575 / FGSC 10137) (Verticillium wilt) protein is DNA (cytosine-5-)-methyltransferase DMT5.